Consider the following 64-residue polypeptide: MKQKTHKGTAKRVKITGSGKLRREQANRRHLLEGKPSKRTRRLKGTEDVAKADTKRIKRLLGKA.

Residues 1–14 are compositionally biased toward basic residues; it reads MKQKTHKGTAKRVK. A disordered region spans residues 1–50; sequence MKQKTHKGTAKRVKITGSGKLRREQANRRHLLEGKPSKRTRRLKGTEDVA. Residues 21-36 show a composition bias toward basic and acidic residues; it reads LRREQANRRHLLEGKP.

Belongs to the bacterial ribosomal protein bL35 family.

This Corynebacterium diphtheriae (strain ATCC 700971 / NCTC 13129 / Biotype gravis) protein is Large ribosomal subunit protein bL35.